Here is a 252-residue protein sequence, read N- to C-terminus: 3-dehydroquinate dehydratase (252 aa).

3-dehydroquinate contacts are provided by residues 46–48 and arginine 82; that span reads EWR. Catalysis depends on histidine 143, which acts as the Proton donor/acceptor. Catalysis depends on lysine 170, which acts as the Schiff-base intermediate with substrate. Residues arginine 212, serine 231, and glutamine 235 each coordinate 3-dehydroquinate.

This sequence belongs to the type-I 3-dehydroquinase family. In terms of assembly, homodimer.

It catalyses the reaction 3-dehydroquinate = 3-dehydroshikimate + H2O. It functions in the pathway metabolic intermediate biosynthesis; chorismate biosynthesis; chorismate from D-erythrose 4-phosphate and phosphoenolpyruvate: step 3/7. Its function is as follows. Involved in the third step of the chorismate pathway, which leads to the biosynthesis of aromatic amino acids. Catalyzes the cis-dehydration of 3-dehydroquinate (DHQ) and introduces the first double bond of the aromatic ring to yield 3-dehydroshikimate. The sequence is that of 3-dehydroquinate dehydratase from Listeria monocytogenes serovar 1/2a (strain ATCC BAA-679 / EGD-e).